The sequence spans 561 residues: Dihydroxy-acid dehydratase (561 aa).

Residue aspartate 78 coordinates Mg(2+). [2Fe-2S] cluster is bound at residue cysteine 119. 2 residues coordinate Mg(2+): aspartate 120 and lysine 121. An N6-carboxylysine modification is found at lysine 121. Cysteine 192 contacts [2Fe-2S] cluster. Glutamate 448 contacts Mg(2+). Catalysis depends on serine 474, which acts as the Proton acceptor.

The protein belongs to the IlvD/Edd family. As to quaternary structure, homodimer. It depends on [2Fe-2S] cluster as a cofactor. Mg(2+) is required as a cofactor.

The catalysed reaction is (2R)-2,3-dihydroxy-3-methylbutanoate = 3-methyl-2-oxobutanoate + H2O. The enzyme catalyses (2R,3R)-2,3-dihydroxy-3-methylpentanoate = (S)-3-methyl-2-oxopentanoate + H2O. The protein operates within amino-acid biosynthesis; L-isoleucine biosynthesis; L-isoleucine from 2-oxobutanoate: step 3/4. It functions in the pathway amino-acid biosynthesis; L-valine biosynthesis; L-valine from pyruvate: step 3/4. Functionally, functions in the biosynthesis of branched-chain amino acids. Catalyzes the dehydration of (2R,3R)-2,3-dihydroxy-3-methylpentanoate (2,3-dihydroxy-3-methylvalerate) into 2-oxo-3-methylpentanoate (2-oxo-3-methylvalerate) and of (2R)-2,3-dihydroxy-3-methylbutanoate (2,3-dihydroxyisovalerate) into 2-oxo-3-methylbutanoate (2-oxoisovalerate), the penultimate precursor to L-isoleucine and L-valine, respectively. The sequence is that of Dihydroxy-acid dehydratase from Sulfurimonas denitrificans (strain ATCC 33889 / DSM 1251) (Thiomicrospira denitrificans (strain ATCC 33889 / DSM 1251)).